We begin with the raw amino-acid sequence, 98 residues long: Acylphosphatase (98 aa).

Positions 12 to 98 constitute an Acylphosphatase-like domain; sequence TYYVRVRGVV…ERRFERFQQQ (87 aa). Active-site residues include Arg27 and Asn45.

Belongs to the acylphosphatase family.

It catalyses the reaction an acyl phosphate + H2O = a carboxylate + phosphate + H(+). This Burkholderia vietnamiensis (strain G4 / LMG 22486) (Burkholderia cepacia (strain R1808)) protein is Acylphosphatase (acyP).